Reading from the N-terminus, the 792-residue chain is X-ray radiation resistance-associated protein 1 (792 aa).

6 LRR repeats span residues Asp-104–Asn-125, Ala-141–Ile-155, Leu-164–Gly-184, His-188–Ala-209, Ala-229–Ala-250, and Arg-254–Gln-275. Disordered regions lie at residues Ala-490–Cys-517, Thr-537–Glu-562, and Ile-577–Gly-601. A compositionally biased stretch (basic and acidic residues) spans Ser-549–Ser-560. Residues His-723–Ser-745 are a coiled coil.

In terms of tissue distribution, expressed predominantly in testis followed by prostate and ovary. Low levels found in other tissues including peripheral blood leukocytes, spleen, thymus, small intestine and colon. Also expressed in neuroblastoma, glioma, breast, lung, leukemia, renal, ovarian, prostate and colorectal cancer cell lines.

Its subcellular location is the cytoplasm. The protein resides in the nucleus. May be involved in the response of cells to X-ray radiation. The sequence is that of X-ray radiation resistance-associated protein 1 from Homo sapiens (Human).